Here is a 723-residue protein sequence, read N- to C-terminus: 1,3-beta-galactosyl-N-acetylhexosamine phosphorylase Cphy0577 (723 aa).

Catalysis depends on Asp317, which acts as the Proton donor.

Belongs to the glycoside hydrolase 112 family.

The enzyme catalyses beta-D-galactosyl-(1-&gt;3)-N-acetyl-D-glucosamine + phosphate = alpha-D-galactose 1-phosphate + N-acetyl-D-glucosamine. In terms of biological role, reversibly phosphorolyzes beta-D-galactopyranosyl-(1-&gt;3)-N-acetyl-D-glucosamine to form alpha-D-galactopyranose 1-phosphate and acetyl-D-glucosamine. Active towards galacto-N-biose and lacto-N-biose. Does not phosphorolyze galacto-N-tetraose or lacto-N-tetraose. In the reverse reaction has activity toward N-acetyl-D-glucosamine and N-acetyl-D-galactosamine, but not L-rhamnose, D-glucose or D-galactose. The chain is 1,3-beta-galactosyl-N-acetylhexosamine phosphorylase Cphy0577 from Lachnoclostridium phytofermentans (strain ATCC 700394 / DSM 18823 / ISDg) (Clostridium phytofermentans).